We begin with the raw amino-acid sequence, 141 residues long: Hemoglobin subunit alpha (141 aa).

Residues 1–141 (VLSAADKGHV…VSTVLTSKYR (141 aa)) enclose the Globin domain. Serine 3 carries the phosphoserine modification. N6-succinyllysine is present on residues lysine 7 and lysine 11. An N6-acetyllysine; alternate modification is found at lysine 16. Lysine 16 is modified (N6-succinyllysine; alternate). Tyrosine 24 carries the post-translational modification Phosphotyrosine. At serine 35 the chain carries Phosphoserine. Lysine 40 bears the N6-succinyllysine mark. Phosphoserine is present on serine 49. Histidine 58 is an O2 binding site. Residue histidine 87 coordinates heme b. Position 102 is a phosphoserine (serine 102). Position 108 is a phosphothreonine (threonine 108). Serine 124 carries the post-translational modification Phosphoserine. 2 positions are modified to phosphothreonine: threonine 134 and threonine 137. A Phosphoserine modification is found at serine 138.

The protein belongs to the globin family. As to quaternary structure, heterotetramer of two alpha chains and two beta chains. In terms of tissue distribution, red blood cells.

Involved in oxygen transport from the lung to the various peripheral tissues. Functionally, hemopressin acts as an antagonist peptide of the cannabinoid receptor CNR1. Hemopressin-binding efficiently blocks cannabinoid receptor CNR1 and subsequent signaling. This Macropus giganteus (Eastern gray kangaroo) protein is Hemoglobin subunit alpha (HBA).